The chain runs to 335 residues: Legumin type B (335 aa).

Disordered regions lie at residues Pro47–Val87 and Thr102–Gly155. A compositionally biased stretch (basic and acidic residues) spans Asp105 to Asn118. Residues Gln135–Glu144 show a composition bias toward acidic residues. Residues Glu167 to Thr314 enclose the Cupin type-1 domain.

The protein belongs to the 11S seed storage protein (globulins) family. As to quaternary structure, hexamer; each subunit is composed of an acidic and a basic chain derived from a single precursor and linked by a disulfide bond.

Its function is as follows. This protein found in the seeds of many leguminous and non-leguminous plants is the source of sulfur-containing amino acids in seed meals. In Vicia faba (Broad bean), this protein is Legumin type B (LEB7).